The sequence spans 220 residues: Adenylate kinase (220 aa).

12-17 (GAGKGT) lines the ATP pocket. Residues 32-62 (STGDIFRDIVKKENDELGKKIKEIMERGELV) form an NMP region. AMP contacts are provided by residues Thr-33, Arg-38, 60-62 (ELV), 88-91 (GYPR), and Gln-95. The LID stretch occupies residues 129-166 (ARRICPKCGRIYNLISLPPKEDELCDDCKVKLVQREDD). Arg-130 lines the ATP pocket. Residues Cys-133 and Cys-136 each contribute to the Zn(2+) site. 139 to 140 (IY) contacts ATP. Residues Cys-153 and Cys-156 each coordinate Zn(2+). 2 residues coordinate AMP: Arg-163 and Arg-174. Ile-202 contacts ATP.

The protein belongs to the adenylate kinase family. As to quaternary structure, monomer.

It localises to the cytoplasm. It carries out the reaction AMP + ATP = 2 ADP. The protein operates within purine metabolism; AMP biosynthesis via salvage pathway; AMP from ADP: step 1/1. In terms of biological role, catalyzes the reversible transfer of the terminal phosphate group between ATP and AMP. Plays an important role in cellular energy homeostasis and in adenine nucleotide metabolism. The sequence is that of Adenylate kinase from Thermotoga maritima (strain ATCC 43589 / DSM 3109 / JCM 10099 / NBRC 100826 / MSB8).